The sequence spans 454 residues: GTPase Der (454 aa).

EngA-type G domains follow at residues 4-167 (AIVA…SEDK) and 188-363 (LQLA…ASWQ). GTP contacts are provided by residues 10–17 (GKPNVGKS), 56–60 (DTPGL), 121–124 (NKTE), 194–201 (GRPNCGKS), 241–245 (DTAGV), and 306–309 (NKCD). One can recognise a KH-like domain in the interval 364–450 (KRVTTGTLNQ…PVRLSFVKGK (87 aa)).

The protein belongs to the TRAFAC class TrmE-Era-EngA-EngB-Septin-like GTPase superfamily. EngA (Der) GTPase family. Associates with the 50S ribosomal subunit.

Its function is as follows. GTPase that plays an essential role in the late steps of ribosome biogenesis. The polypeptide is GTPase Der (Orientia tsutsugamushi (strain Boryong) (Rickettsia tsutsugamushi)).